A 298-amino-acid chain; its full sequence is GTPase Era (298 aa).

An Era-type G domain is found at 3–170 (KSGFVAILGR…VQLLKDNLEE (168 aa)). The segment at 11-18 (GRPNVGKS) is G1. 11-18 (GRPNVGKS) contributes to the GTP binding site. A G2 region spans residues 37–41 (QSTRN). The G3 stretch occupies residues 58–61 (DTPG). GTP is bound by residues 58–62 (DTPGI) and 120–123 (NKID). Residues 120–123 (NKID) form a G4 region. The interval 149-151 (ISA) is G5. Residues 201–279 (TQQEVPHSVA…YLETWVKVKK (79 aa)) enclose the KH type-2 domain.

Belongs to the TRAFAC class TrmE-Era-EngA-EngB-Septin-like GTPase superfamily. Era GTPase family. Monomer.

It is found in the cytoplasm. The protein localises to the cell membrane. An essential GTPase that binds both GDP and GTP, with rapid nucleotide exchange. Plays a role in 16S rRNA processing and 30S ribosomal subunit biogenesis and possibly also in cell cycle regulation and energy metabolism. This Streptococcus equi subsp. zooepidemicus (strain H70) protein is GTPase Era.